A 141-amino-acid polypeptide reads, in one-letter code: Putative nickel-responsive regulator (141 aa).

Ni(2+) is bound by residues histidine 80, histidine 91, histidine 93, and cysteine 99.

This sequence belongs to the transcriptional regulatory CopG/NikR family. It depends on Ni(2+) as a cofactor.

Its function is as follows. Transcriptional regulator. The sequence is that of Putative nickel-responsive regulator from Methanococcus maripaludis (strain C6 / ATCC BAA-1332).